Here is a 105-residue protein sequence, read N- to C-terminus: Putative membrane protein insertion efficiency factor (105 aa).

Belongs to the UPF0161 family.

It localises to the cell membrane. Functionally, could be involved in insertion of integral membrane proteins into the membrane. In Bifidobacterium longum (strain NCC 2705), this protein is Putative membrane protein insertion efficiency factor.